Consider the following 406-residue polypeptide: Probable endo-xylogalacturonan hydrolase A (406 aa).

The first 18 residues, 1-18, serve as a signal peptide directing secretion; the sequence is MTLYRNLLLLASLGLSYA. Residue Asn84 is glycosylated (N-linked (GlcNAc...) asparagine). PbH1 repeat units lie at residues 183-213 and 214-235; these read ATNV…DIGE and STYV…ALKP. The Proton donor role is filled by Asp228. His251 is an active-site residue. PbH1 repeat units lie at residues 266 to 289, 299 to 320, and 333 to 375; these read VKNI…KTYP, VSNV…QIQS, and PGNA…SISG. N-linked (GlcNAc...) asparagine glycans are attached at residues Asn278 and Asn301.

Belongs to the glycosyl hydrolase 28 family.

The protein localises to the secreted. Pectinolytic enzyme involved in the degradation of xylogalacturonan (xga), a galacturonan backbone heavily substituted with xylose, and which is one important component of the hairy regions of pectin. Activity requires a galacturonic acid backbone substituted with xylose. The protein is Probable endo-xylogalacturonan hydrolase A (xghA) of Aspergillus niger (strain ATCC MYA-4892 / CBS 513.88 / FGSC A1513).